We begin with the raw amino-acid sequence, 271 residues long: Mediator of RNA polymerase II transcription subunit 18 (271 aa).

Residues 89–119 are disordered; that stretch reads FGGNPSSSGDPDVSMSGLEEKPSSSSSSYSY.

The protein belongs to the Mediator complex subunit 18 family. In terms of assembly, component of the Mediator complex.

It localises to the nucleus. In terms of biological role, component of the Mediator complex, a coactivator involved in the regulated transcription of nearly all RNA polymerase II-dependent genes. Mediator functions as a bridge to convey information from gene-specific regulatory proteins to the basal RNA polymerase II transcription machinery. Mediator is recruited to promoters by direct interactions with regulatory proteins and serves as a scaffold for the assembly of a functional preinitiation complex with RNA polymerase II and the general transcription factors. This Aspergillus niger (strain ATCC MYA-4892 / CBS 513.88 / FGSC A1513) protein is Mediator of RNA polymerase II transcription subunit 18 (srb5).